Reading from the N-terminus, the 579-residue chain is MNRDNMDTTKRKEDHTKHTTDVIEFYEEGTAASSLNIATEKANSSPSILRRIINRAAWLSKKVDAMGVESTGIQRISPYERGTSKKQFLHVAGLWLSATGGLSSMSSFLLGPLLFGLSFRESVASSLISVTIGCLIAAYCSIMGPQSGCRQMVTARYLFGWWFVKLVALASIIGVMGWSVVNSVVGGEMLAAISNDKVPLWVGIVIVTVCSFLVAIFGIKQVIKVETYLSVPVLTAFLLLYISSSDKYSFVNAYVSKGNLDSSTRKGNWMSFFSLCYSITATWGSITADYYILFPEDTPYIQIFCLTFFGTFLPTCFVGILGLLLASVAMSYKPWSVEYDSHGMGGLLWAGFQRWNGFGKFCVVVLVFSLVSNNIINTYSAAFSIQLSSVFCAKIPRWFWSIVCTIICLVCALIGRNHFSTILGNFLPMIGYWISMYFILLFEENLVFRRFFLHLYTKEFPTVTGEINGPELVGSSKEVEKDAVTNIHLLKRKHKVTKHRYNWDKWEDYEVLTHGYAATFAFIVGVAGVVVGMAQAYWIGPIAAKFGEYGGDVAMWLSMAFSGVVYPPCRYLELRKFGR.

The Cytoplasmic portion of the chain corresponds to Met1–Ala98. The helical transmembrane segment at Thr99–Phe119 threads the bilayer. Topologically, residues Arg120 to Ser122 are extracellular. The chain crosses the membrane as a helical span at residues Val123–Met143. The Cytoplasmic segment spans residues Gly144 to Tyr157. Residues Leu158 to Trp178 traverse the membrane as a helical segment. The Extracellular segment spans residues Ser179–Val198. The chain crosses the membrane as a helical span at residues Pro199–Ile219. Residues Lys220–Gln221 are Cytoplasmic-facing. A helical transmembrane segment spans residues Val222–Ile242. At Ser243–Ser274 the chain is on the extracellular side. A helical membrane pass occupies residues Leu275–Pro295. Residues Glu296 to Gln302 lie on the Cytoplasmic side of the membrane. The helical transmembrane segment at Ile303 to Leu323 threads the bilayer. At Leu324–Cys362 the chain is on the extracellular side. A helical transmembrane segment spans residues Val363 to Phe383. Residues Ser384–Lys394 are Cytoplasmic-facing. Residues Ile395–Gly415 traverse the membrane as a helical segment. At Arg416 to Thr421 the chain is on the extracellular side. A helical transmembrane segment spans residues Ile422–Phe442. Topologically, residues Glu443–Thr519 are cytoplasmic. Residues Phe520–Gly540 traverse the membrane as a helical segment. Topologically, residues Pro541–Lys545 are extracellular. A helical transmembrane segment spans residues Phe546–Tyr566. Over Pro567–Arg579 the chain is Cytoplasmic.

Belongs to the purine-cytosine permease (2.A.39) family.

Its subcellular location is the membrane. Its function is as follows. Thiamine-regulated, high affinity import carrier of pyridoxine, pyridoxal and pyridoxamine. The polypeptide is Vitamin B6 transporter TPN1 (TPN1) (Saccharomyces cerevisiae (strain ATCC 204508 / S288c) (Baker's yeast)).